Here is a 1015-residue protein sequence, read N- to C-terminus: Collagen alpha-2(I) chain (1015 aa).

The interval 1–1015 (SGGFDFSFLP…FGYEGDFYRA (1015 aa)) is disordered. 4-hydroxyproline is present on residues proline 10 and proline 13. Over residues 20–30 (KGVGLGPGPMG) the composition is skewed to gly residues. Proline 38 bears the 4-hydroxyproline mark. Positions 43–69 (QGPAGEPGEPGQTGPAGARGPAGPPGK) are enriched in low complexity. The segment covering 70 to 84 (AGEDGHPGKPGRPGE) has biased composition (basic and acidic residues). 5-hydroxylysine; alternate is present on lysine 106. Lysine 106 carries O-linked (Gal...) hydroxylysine; alternate glycosylation. Composition is skewed to low complexity over residues 140-169 (VGAP…SAGP), 194-208 (AGPR…VSGP), and 235-250 (PGPV…RGLV). Residues 302–311 (GLRGGPGSRG) are compositionally biased toward gly residues. Low complexity predominate over residues 324 to 340 (PAGSRGASGPAGVRGPS). 4-hydroxyproline occurs at positions 346 and 349. The segment covering 441 to 450 (GVQGGKGEQG) has biased composition (gly residues). Residues 497 to 514 (PGESGAAGPVGPIGSRGP) show a composition bias toward low complexity. The span at 534–545 (GTAGPGSGGLPG) shows a compositional bias: gly residues. 2 stretches are compositionally biased toward low complexity: residues 568 to 612 (VGTT…PRGS) and 619 to 639 (VGPA…QPGA). The segment covering 640-649 (KGERGTKGPK) has biased composition (basic and acidic residues). Residues 657 to 670 (PTGPVGAAGPSGPN) are compositionally biased toward low complexity. Residues 674–686 (GPAGGRGDGGPPG) are compositionally biased toward gly residues. Over residues 687–697 (LTGFPGAAGRT) the composition is skewed to low complexity. Over residues 734-743 (GETGAGGPPG) the composition is skewed to gly residues. 4 stretches are compositionally biased toward low complexity: residues 751 to 778 (SGEP…LGLP), 786 to 799 (LPGV…PGPL), 846 to 868 (YAGN…VGPA), and 877 to 897 (PGPA…PSGP). Basic and acidic residues predominate over residues 901–912 (RGDKGEAGDKGP). Residues 987–997 (PAGPPGPPGPP) are compositionally biased toward pro residues.

The protein belongs to the fibrillar collagen family. In terms of assembly, trimers of one alpha 2(I) and two alpha 1(I) chains. Interacts (via C-terminus) with TMEM131 (via PapD-L domain); the interaction is direct and is involved in assembly and TRAPPIII ER-to-Golgi transport complex-dependent secretion of collagen. Prolines at the third position of the tripeptide repeating unit (G-X-Y) are hydroxylated in some or all of the chains. As to expression, expressed in bones.

The protein localises to the secreted. The protein resides in the extracellular space. It is found in the extracellular matrix. Its function is as follows. Type I collagen is a member of group I collagen (fibrillar forming collagen). This chain is Collagen alpha-2(I) chain, found in Doedicurus sp. (South American giant glyptodont).